Reading from the N-terminus, the 178-residue chain is ADP-ribosylation factor-like protein 5 (178 aa).

Gly-2 carries the N-myristoyl glycine lipid modification. Residues 24 to 31 (GLDNAGKT), 67 to 71 (DIGGQ), and 126 to 129 (NKQD) each bind GTP.

It belongs to the small GTPase superfamily. Arf family.

The protein resides in the golgi apparatus. In terms of biological role, GTP-binding protein that may be involved in protein trafficking; may modulate vesicle budding and uncoating within the Golgi apparatus. Plays a role in the shedding of pathogen spores from intestinal cells. This chain is ADP-ribosylation factor-like protein 5 (arl-5), found in Caenorhabditis elegans.